A 403-amino-acid chain; its full sequence is Zinc metalloproteinase nas-8 (403 aa).

The N-terminal stretch at 1–29 (MRRNDLLNNKITIFLSSLSLFVIIIPIYA) is a signal peptide. A propeptide spanning residues 30-111 (AEKDLLPPST…DPKNSESLRR (82 aa)) is cleaved from the precursor. In terms of domain architecture, Peptidase M12A spans 112–307 (NGVITGTRKW…LKMNLMYQCS (196 aa)). 5 disulfide bridges follow: Cys154/Cys306, Cys176/Cys195, Cys338/Cys372, Cys345/Cys365, and Cys352/Cys369. His203 is a binding site for Zn(2+). Glu204 is an active-site residue. Positions 207 and 213 each coordinate Zn(2+). Residues 338–372 (CRDRTNLCWRWIDRCKSFFFEQIMKEFCSLSCGYC) form the ShKT domain. Residue Asn386 is glycosylated (N-linked (GlcNAc...) asparagine).

The cofactor is Zn(2+).

The protein resides in the secreted. The enzyme catalyses Hydrolysis of peptide bonds in substrates containing five or more amino acids, preferentially with Ala in P1', and Pro in P2'.. Metalloprotease. The protein is Zinc metalloproteinase nas-8 (nas-8) of Caenorhabditis elegans.